A 494-amino-acid polypeptide reads, in one-letter code: Poly(3-hydroxybutyrate) depolymerase (494 aa).

The N-terminal stretch at 1 to 25 (MAFNFIRAAAAGAAMALCGVGSVHA) is a signal peptide. S45 (nucleophile) is an active-site residue. Catalysis depends on charge relay system residues D132 and H166. Residues 347–431 (APTGVSTSGA…AAASGTTLAA (85 aa)) form the Fibronectin type-III domain.

This sequence belongs to the AB hydrolase superfamily. Lipase family.

The protein localises to the secreted. It carries out the reaction [(3R)-hydroxybutanoate](n) + H2O = [(3R)-hydroxybutanoate](n-2) + (3R)-hydroxybutanoate dimer + H(+). It catalyses the reaction [(3R)-hydroxybutanoate](n) + H2O = [(3R)-hydroxybutanoate](n-1) + (R)-3-hydroxybutanoate + H(+). The enzyme catalyses (3R)-hydroxybutanoate dimer + H2O = 2 (R)-3-hydroxybutanoate + H(+). Catalyzes the hydrolysis of poly(3-hydroxybutyrate) (PHB) film, producing the monomer and dimer of 3-hydroxybutyrate (3HB), while the 3HB trimer and tetramer are not formed. This is Poly(3-hydroxybutyrate) depolymerase from Delftia acidovorans (Pseudomonas acidovorans).